Consider the following 211-residue polypeptide: DNA dC-&gt;dU-editing enzyme APOBEC-3H (211 aa).

The CMP/dCMP-type deaminase domain maps to 4–126 (LTAKTFSLQF…RRQQEGLRLL (123 aa)). H54 is a binding site for Zn(2+). The active-site Proton donor is E56. Residues C85 and C88 each contribute to the Zn(2+) site.

It belongs to the cytidine and deoxycytidylate deaminase family. As to quaternary structure, homodimer. Requires Zn(2+) as cofactor.

It is found in the cytoplasm. The catalysed reaction is a 2'-deoxycytidine in single-stranded DNA + H2O + H(+) = a 2'-deoxyuridine in single-stranded DNA + NH4(+). Functionally, DNA deaminase (cytidine deaminase) which may act as an inhibitor of retrovirus replication and retrotransposon mobility via deaminase-dependent and -independent mechanisms. This is DNA dC-&gt;dU-editing enzyme APOBEC-3H from Pongo pygmaeus (Bornean orangutan).